The chain runs to 1703 residues: Ferlin 2 (1703 aa).

C2 domains lie at 18-141 (IRKL…KTWL) and 207-332 (KQPV…FRWF). Disordered stretches follow at residues 913–937 (NQFNDDDEGDNEDEQDSRENDFDDN), 970–1025 (NLDK…TSST), and 1194–1228 (KNKSNRSSMSLSMRSSIQSNTFKSSRKTSRSQKLG). The span at 916-928 (NDDDEGDNEDEQD) shows a compositional bias: acidic residues. Positions 979 to 991 (QPQSLKNLQNLDS) are enriched in polar residues. The span at 993–1009 (SKADQKSQFDLKSESKS) shows a compositional bias: basic and acidic residues. The span at 1198–1209 (NRSSMSLSMRSS) shows a compositional bias: low complexity. The 130-residue stretch at 1466–1595 (VARIIPPSTI…LKKLKEGIVF (130 aa)) folds into the C2 3 domain. A disordered region spans residues 1628–1651 (AAESDPVGEGQNEPNKDPILEKPK). Over residues 1641–1651 (PNKDPILEKPK) the composition is skewed to basic and acidic residues. The helical transmembrane segment at 1681–1701 (FAGIFVSIVTMMILFVKPGIL) threads the bilayer.

The protein belongs to the ferlin family.

It is found in the membrane. Functionally, regulates mucocyst exocytosis. The sequence is that of Ferlin 2 from Tetrahymena thermophila (strain SB210).